Reading from the N-terminus, the 257-residue chain is Large ribosomal subunit protein uL2 (257 aa).

A disordered region spans residues 207–226 (VEHPFGGGNHQHIGKPSTIR).

Belongs to the universal ribosomal protein uL2 family. As to quaternary structure, component of the large ribosomal subunit.

The protein resides in the cytoplasm. Component of the large ribosomal subunit. The ribosome is a large ribonucleoprotein complex responsible for the synthesis of proteins in the cell. This chain is Large ribosomal subunit protein uL2 (rpl8), found in Ictalurus punctatus (Channel catfish).